A 1059-amino-acid chain; its full sequence is Transmembrane protease serine 9 (1059 aa).

At 1–29 the chain is on the cytoplasmic side; sequence MEPTVADVHLVPRTTKEVPALDAACCRAA. The chain crosses the membrane as a helical; Signal-anchor for type II membrane protein span at residues 30-50; that stretch reads SIGVVATSLVVLTLGVLLAFL. Residues 51–1059 are Extracellular-facing; it reads STQGFHVDHT…RGWIGQHIQE (1009 aa). In terms of domain architecture, LDL-receptor class A spans 153-190; that stretch reads RCPGNSFSCGNSQCVTKVNPECDDQEDCSDGSDEAHCE. Disulfide bonds link C154/C166, C161/C180, C174/C189, and C228/C244. In terms of domain architecture, Peptidase S1 1 spans 203 to 436; the sequence is IVGGMEASPG…LRDWILEATT (234 aa). Residues H243 and D292 each act as charge relay system in the active site. 3 disulfide bridges follow: C326/C393, C358/C372, and C383/C412. Residue S387 is the Charge relay system of the active site. Residues 443 to 469 are disordered; that stretch reads APTMAPAPAAPSTAWPTSPESPVVSTP. A Peptidase S1 2 domain is found at 504 to 736; the sequence is VVGGFGAASG…LKGWILEIMS (233 aa). C529 and C545 are oxidised to a cystine. H544 functions as the Charge relay system in the catalytic mechanism. N547 carries N-linked (GlcNAc...) asparagine glycosylation. Residue D592 is the Charge relay system of the active site. 3 cysteine pairs are disulfide-bonded: C626/C693, C658/C672, and C683/C712. N-linked (GlcNAc...) asparagine glycans are attached at residues N638 and N663. Catalysis depends on S687, which acts as the Charge relay system. Positions 758-814 are disordered; the sequence is TTAGLTVPGATPSRPTPGAASRVTGQPANSTLSAVSTTARGQTPFPDAPEATTHTQL. The segment covering 780-798 has biased composition (polar residues); sequence VTGQPANSTLSAVSTTARG. N-linked (GlcNAc...) asparagine glycosylation occurs at N786. The Peptidase S1 3 domain occupies 827 to 1058; that stretch reads IVGGSAAGRG…VRGWIGQHIQ (232 aa). 4 cysteine pairs are disulfide-bonded: C853–C869, C949–C1015, C980–C994, and C1005–C1034.

It belongs to the peptidase S1 family. In terms of processing, proteolytically cleaved to generate 3 independent serine protease chains. The cleaved chains may remain attached to the membrane thanks to disulfide bonds. It is unclear whether cleavage always takes place. In terms of tissue distribution, expressed in fetal human tissues, such as kidney, liver, lung and brain, and in a variety of tumor cell lines. Weakly expressed in adult tissues including skeletal muscle, liver, placenta and heart.

The protein localises to the cell membrane. Its activity is regulated as follows. Inhibited by serine protease inhibitors PMSF and 4-(2-aminoethyl)benzenesulfonyl fluoride, but not by EDTA. Its function is as follows. Serase-1 and serase-2 are serine proteases that hydrolyze the peptides N-t-Boc-Gln-Ala-Arg-AMC and N-t-Boc-Gln-Gly-Arg-AMC. In contrast, N-t-Boc-Ala-Phe-Lys-AMC and N-t-Boc-Ala-Pro-Ala-AMC are not significantly hydrolyzed. The chain is Transmembrane protease serine 9 (TMPRSS9) from Homo sapiens (Human).